The following is a 613-amino-acid chain: Dihydroxy-acid dehydratase (613 aa).

D81 lines the Mg(2+) pocket. C122 is a binding site for [2Fe-2S] cluster. Mg(2+) contacts are provided by D123 and K124. K124 carries the N6-carboxylysine modification. C197 provides a ligand contact to [2Fe-2S] cluster. Position 493 (E493) interacts with Mg(2+). Residue S519 is the Proton acceptor of the active site.

This sequence belongs to the IlvD/Edd family. Homodimer. [2Fe-2S] cluster is required as a cofactor. Mg(2+) serves as cofactor.

The enzyme catalyses (2R)-2,3-dihydroxy-3-methylbutanoate = 3-methyl-2-oxobutanoate + H2O. It catalyses the reaction (2R,3R)-2,3-dihydroxy-3-methylpentanoate = (S)-3-methyl-2-oxopentanoate + H2O. It functions in the pathway amino-acid biosynthesis; L-isoleucine biosynthesis; L-isoleucine from 2-oxobutanoate: step 3/4. The protein operates within amino-acid biosynthesis; L-valine biosynthesis; L-valine from pyruvate: step 3/4. Functionally, functions in the biosynthesis of branched-chain amino acids. Catalyzes the dehydration of (2R,3R)-2,3-dihydroxy-3-methylpentanoate (2,3-dihydroxy-3-methylvalerate) into 2-oxo-3-methylpentanoate (2-oxo-3-methylvalerate) and of (2R)-2,3-dihydroxy-3-methylbutanoate (2,3-dihydroxyisovalerate) into 2-oxo-3-methylbutanoate (2-oxoisovalerate), the penultimate precursor to L-isoleucine and L-valine, respectively. In Corynebacterium glutamicum (strain R), this protein is Dihydroxy-acid dehydratase.